A 228-amino-acid chain; its full sequence is Ribosomal RNA small subunit methyltransferase G (228 aa).

Residues Gly89, Leu94, 140–141 (VE), and Arg159 contribute to the S-adenosyl-L-methionine site.

The protein belongs to the methyltransferase superfamily. RNA methyltransferase RsmG family.

The protein resides in the cytoplasm. The enzyme catalyses guanosine(527) in 16S rRNA + S-adenosyl-L-methionine = N(7)-methylguanosine(527) in 16S rRNA + S-adenosyl-L-homocysteine. Its function is as follows. Specifically methylates the N7 position of guanine in position 527 of 16S rRNA. The protein is Ribosomal RNA small subunit methyltransferase G of Burkholderia ambifaria (strain MC40-6).